The primary structure comprises 469 residues: Actin-related protein 4 (469 aa).

The disordered stretch occupies residues 104–136 (PERSTPPSKKGINISDDGDVPMEDDGNNNEDAT). Positions 119-136 (DDGDVPMEDDGNNNEDAT) are enriched in acidic residues.

The protein belongs to the actin family. ARP4 subfamily. In terms of assembly, component of the NuA4 histone acetyltransferase complex, of the INO80 chromatin remodeling complex, and of the SWR1 chromatin remodeling complex.

It localises to the nucleus. Functionally, chromatin interaction component of the NuA4 histone acetyltransferase complex which is involved in transcriptional activation of selected genes principally by acetylation of nucleosomal histone H4 and H2A. The NuA4 complex is also involved in DNA repair. Is required for NuA4 complex integrity. Component of the SWR1 complex which mediates the ATP-dependent exchange of histone H2A for the H2A variant H2A.Z leading to transcriptional regulation of selected genes by chromatin remodeling. Component of the INO80 complex which remodels chromatin by shifting nucleosomes and is involved in DNA repair. The protein is Actin-related protein 4 (arp-4) of Neurospora crassa (strain ATCC 24698 / 74-OR23-1A / CBS 708.71 / DSM 1257 / FGSC 987).